The following is a 394-amino-acid chain: MDSQGRKVVVCDNGTGFVKCGYAGSNFPEHIFPALVGRPIIRSTTKVGNIEIKDLMVGDEASELRSMLEVNYPMENGIVRNWDDMKHLWDYTFGPEKLNIDTRNCKILLTEPPMNPTKNREKIVEVMFETYQFSGVYVAIQAVLTLYAQGLLTGVVVDSGDGVTHICPVYEGFSLPHLTRRLDIAGRDITRYLIKLLLLRGYAFNHSADFETVRMIKEKLCYVGYNIEQEQKLALETTVLVESYTLPDGRIIKVGGERFEAPEALFQPHLINVEGVGVAELLFNTIQAADIDTRSEFYKHIVLSGGSTMYPGLPSRLERELKQLYLERVLKGDVEKLSKFKIRIEDPPRRKHMVFLGGAVLADIMKDKDNFWMTRQEYQEKGVRVLEKLGVTVR.

M1 bears the N-acetylmethionine mark. ATP-binding positions include 160–162 and 214–218; these read GDG and RMIKE. The residue at position 299 (K299) is an N6-acetyllysine. 305-310 is a binding site for ATP; the sequence is GGSTMY. K322 carries the post-translational modification N6-acetyllysine.

It belongs to the actin family. ARP2 subfamily. As to quaternary structure, component of the Arp2/3 complex composed of ACTR2/ARP2, ACTR3/ARP3, ARPC1B/p41-ARC, ARPC2/p34-ARC, ARPC3/p21-ARC, ARPC4/p20-ARC and ARPC5/p16-ARC. Interacts with AVIL.

It localises to the cytoplasm. The protein localises to the cytoskeleton. It is found in the cell projection. Its subcellular location is the nucleus. Its function is as follows. ATP-binding component of the Arp2/3 complex, a multiprotein complex that mediates actin polymerization upon stimulation by nucleation-promoting factor (NPF). The Arp2/3 complex mediates the formation of branched actin networks in the cytoplasm, providing the force for cell motility. Seems to contact the pointed end of the daughter actin filament. In podocytes, required for the formation of lamellipodia downstream of AVIL and PLCE1 regulation. In addition to its role in the cytoplasmic cytoskeleton, the Arp2/3 complex also promotes actin polymerization in the nucleus, thereby regulating gene transcription and repair of damaged DNA. The Arp2/3 complex promotes homologous recombination (HR) repair in response to DNA damage by promoting nuclear actin polymerization, leading to drive motility of double-strand breaks (DSBs). The chain is Actin-related protein 2 (ACTR2) from Bos taurus (Bovine).